The sequence spans 248 residues: 3-deoxy-manno-octulosonate cytidylyltransferase (248 aa).

Belongs to the KdsB family.

The protein resides in the cytoplasm. The catalysed reaction is 3-deoxy-alpha-D-manno-oct-2-ulosonate + CTP = CMP-3-deoxy-beta-D-manno-octulosonate + diphosphate. The protein operates within nucleotide-sugar biosynthesis; CMP-3-deoxy-D-manno-octulosonate biosynthesis; CMP-3-deoxy-D-manno-octulosonate from 3-deoxy-D-manno-octulosonate and CTP: step 1/1. It functions in the pathway bacterial outer membrane biogenesis; lipopolysaccharide biosynthesis. Functionally, activates KDO (a required 8-carbon sugar) for incorporation into bacterial lipopolysaccharide in Gram-negative bacteria. The chain is 3-deoxy-manno-octulosonate cytidylyltransferase from Escherichia coli O127:H6 (strain E2348/69 / EPEC).